The chain runs to 292 residues: Ribosomal protein L11 methyltransferase (292 aa).

Residues threonine 144, glycine 165, aspartate 187, and asparagine 229 each coordinate S-adenosyl-L-methionine.

Belongs to the methyltransferase superfamily. PrmA family.

It localises to the cytoplasm. The catalysed reaction is L-lysyl-[protein] + 3 S-adenosyl-L-methionine = N(6),N(6),N(6)-trimethyl-L-lysyl-[protein] + 3 S-adenosyl-L-homocysteine + 3 H(+). In terms of biological role, methylates ribosomal protein L11. The sequence is that of Ribosomal protein L11 methyltransferase from Pseudomonas savastanoi pv. phaseolicola (strain 1448A / Race 6) (Pseudomonas syringae pv. phaseolicola (strain 1448A / Race 6)).